Consider the following 158-residue polypeptide: Ribosome maturation factor RimP (158 aa).

Belongs to the RimP family.

The protein resides in the cytoplasm. Its function is as follows. Required for maturation of 30S ribosomal subunits. The protein is Ribosome maturation factor RimP of Lactobacillus delbrueckii subsp. bulgaricus (strain ATCC 11842 / DSM 20081 / BCRC 10696 / JCM 1002 / NBRC 13953 / NCIMB 11778 / NCTC 12712 / WDCM 00102 / Lb 14).